Consider the following 249-residue polypeptide: Testis-expressed protein 101 (249 aa).

A signal peptide spans 1-25 (MGTPRIQHLLILLVLGASLLTSGLE). Asn-45 and Asn-159 each carry an N-linked (GlcNAc...) asparagine glycan. In terms of domain architecture, UPAR/Ly6 spans 140–211 (CPTCVALGTC…PMFVREACPH (72 aa)). Residue Asn-222 is the site of GPI-anchor amidated asparagine attachment. A propeptide spans 223 to 249 (GATCLPIPVWGLQLLLPLLLPSFIHFS) (removed in mature form).

Interacts with VAMP3. Interacts with LY6K. Interacts with DPEP3; co-localized on the cell surface of spermatocytes, spermatids, and testicular spermatozoa, co-localized only in cytoplasmic droplets of caput and corpus epididymal sperm. Interacts with ADAM5. N-glycosylated; by high mannose and/or biantennary complex and/or certain types of hybrid oligosaccharides; possesses different oligosaccharides chains according to its subcellular localization in the testis. Post-translationally, sheds from membrane raft by ACE and released from the cell surface of epididymal sperm while it passes through the caput epididymis leading to disappearance of TEX101 on spermatozoa; is essential to produce fertile spermatozoa. As to expression, detected in testis and spermatogonia. Not detected in spermatocytes. Detected in blood leukocytes.

It localises to the cell membrane. The protein resides in the membrane raft. Its subcellular location is the cytoplasmic vesicle. It is found in the secretory vesicle. The protein localises to the acrosome. It localises to the secreted. Its function is as follows. Plays a role in fertilization by controlling binding of sperm to zona pellucida and migration of spermatozoa into the oviduct. May play a role in signal transduction and promote protein tyrosine phosphorylation. The protein is Testis-expressed protein 101 of Homo sapiens (Human).